The primary structure comprises 23 residues: SLIQFETLIMKVAGQSGMFSYSA.

Ca(2+) serves as cofactor. Post-translationally, contains 7 disulfide bonds. In terms of tissue distribution, expressed by the venom gland.

It is found in the secreted. The enzyme catalyses a 1,2-diacyl-sn-glycero-3-phosphocholine + H2O = a 1-acyl-sn-glycero-3-phosphocholine + a fatty acid + H(+). In terms of biological role, snake venom phospholipase A2 (PLA2) that shows a moderate inhibition of ADP-induced human platelet aggregation when tested on platelet rich plasma. Exhibits moderate hydrolytic activities and prefers the anionic micelles (dPPC with deoxycholate) to the zwitterionic micelles (dPPC with Triton X-100). PLA2 catalyzes the calcium-dependent hydrolysis of the 2-acyl groups in 3-sn-phosphoglycerides. The protein is Acidic phospholipase A2 CTs-A1 of Trimeresurus stejnegeri (Chinese green tree viper).